The chain runs to 276 residues: NH(3)-dependent NAD(+) synthetase (276 aa).

43-50 is an ATP binding site; sequence GISGGVDS. Aspartate 49 provides a ligand contact to Mg(2+). A deamido-NAD(+)-binding site is contributed by arginine 146. ATP is bound at residue threonine 166. Glutamate 171 provides a ligand contact to Mg(2+). Lysine 179 and aspartate 186 together coordinate deamido-NAD(+). 2 residues coordinate ATP: lysine 195 and threonine 217. Deamido-NAD(+) is bound at residue 266 to 267; sequence HK.

The protein belongs to the NAD synthetase family. In terms of assembly, homodimer.

The catalysed reaction is deamido-NAD(+) + NH4(+) + ATP = AMP + diphosphate + NAD(+) + H(+). The protein operates within cofactor biosynthesis; NAD(+) biosynthesis; NAD(+) from deamido-NAD(+) (ammonia route): step 1/1. Functionally, catalyzes the ATP-dependent amidation of deamido-NAD to form NAD. Uses ammonia as a nitrogen source. The protein is NH(3)-dependent NAD(+) synthetase of Vibrio campbellii (strain ATCC BAA-1116).